The chain runs to 282 residues: 4-diphosphocytidyl-2-C-methyl-D-erythritol kinase (282 aa).

K9 is an active-site residue. An ATP-binding site is contributed by P98 to S108. Residue D140 is part of the active site.

This sequence belongs to the GHMP kinase family. IspE subfamily. As to quaternary structure, homodimer.

The catalysed reaction is 4-CDP-2-C-methyl-D-erythritol + ATP = 4-CDP-2-C-methyl-D-erythritol 2-phosphate + ADP + H(+). The protein operates within isoprenoid biosynthesis; isopentenyl diphosphate biosynthesis via DXP pathway; isopentenyl diphosphate from 1-deoxy-D-xylulose 5-phosphate: step 3/6. In terms of biological role, catalyzes the phosphorylation of the position 2 hydroxy group of 4-diphosphocytidyl-2C-methyl-D-erythritol. This chain is 4-diphosphocytidyl-2-C-methyl-D-erythritol kinase, found in Klebsiella pneumoniae (strain 342).